We begin with the raw amino-acid sequence, 600 residues long: NADH-quinone oxidoreductase subunit C/D (600 aa).

Positions 1–190 (MIDLMPKKNT…EPFFLNEQKE (190 aa)) are NADH dehydrogenase I subunit C. The interval 214-600 (EFMFLNLGPN…IDFVMSDVDR (387 aa)) is NADH dehydrogenase I subunit D.

The protein in the N-terminal section; belongs to the complex I 30 kDa subunit family. It in the C-terminal section; belongs to the complex I 49 kDa subunit family. As to quaternary structure, NDH-1 is composed of 13 different subunits. Subunits NuoB, CD, E, F, and G constitute the peripheral sector of the complex.

The protein localises to the cell inner membrane. The enzyme catalyses a quinone + NADH + 5 H(+)(in) = a quinol + NAD(+) + 4 H(+)(out). In terms of biological role, NDH-1 shuttles electrons from NADH, via FMN and iron-sulfur (Fe-S) centers, to quinones in the respiratory chain. The immediate electron acceptor for the enzyme in this species is believed to be ubiquinone. Couples the redox reaction to proton translocation (for every two electrons transferred, four hydrogen ions are translocated across the cytoplasmic membrane), and thus conserves the redox energy in a proton gradient. The chain is NADH-quinone oxidoreductase subunit C/D from Buchnera aphidicola subsp. Acyrthosiphon pisum (strain APS) (Acyrthosiphon pisum symbiotic bacterium).